Here is a 490-residue protein sequence, read N- to C-terminus: UDP-N-acetylmuramate--L-alanine ligase (490 aa).

ATP is bound at residue 130–136; it reads GTHGKTT.

This sequence belongs to the MurCDEF family.

It is found in the cytoplasm. The catalysed reaction is UDP-N-acetyl-alpha-D-muramate + L-alanine + ATP = UDP-N-acetyl-alpha-D-muramoyl-L-alanine + ADP + phosphate + H(+). Its pathway is cell wall biogenesis; peptidoglycan biosynthesis. Its function is as follows. Cell wall formation. The chain is UDP-N-acetylmuramate--L-alanine ligase from Idiomarina loihiensis (strain ATCC BAA-735 / DSM 15497 / L2-TR).